The chain runs to 356 residues: 5-formaminoimidazole-4-carboxamide-1-(beta)-D-ribofuranosyl 5'-monophosphate synthetase 2 (356 aa).

2 residues coordinate 5-amino-1-(5-phospho-beta-D-ribosyl)imidazole-4-carboxamide: His-27 and Ser-94. Residues 101–333 enclose the ATP-grasp domain; the sequence is RENFTGMAVP…YSDLMQKRLS (233 aa). Residues 145-196 and Glu-226 contribute to the ATP site; that span reads PHDI…TRYD. Asn-255 contributes to the 5-amino-1-(5-phospho-beta-D-ribosyl)imidazole-4-carboxamide binding site. 2 residues coordinate Mg(2+): Glu-293 and Glu-306.

Belongs to the phosphohexose mutase family. It depends on Mg(2+) as a cofactor. Requires Mn(2+) as cofactor.

The enzyme catalyses 5-amino-1-(5-phospho-beta-D-ribosyl)imidazole-4-carboxamide + formate + ATP = 5-formamido-1-(5-phospho-D-ribosyl)imidazole-4-carboxamide + ADP + phosphate. Its pathway is purine metabolism; IMP biosynthesis via de novo pathway; 5-formamido-1-(5-phospho-D-ribosyl)imidazole-4-carboxamide from 5-amino-1-(5-phospho-D-ribosyl)imidazole-4-carboxamide (formate route): step 1/1. In terms of biological role, catalyzes the ATP- and formate-dependent formylation of 5-aminoimidazole-4-carboxamide-1-beta-d-ribofuranosyl 5'-monophosphate (AICAR) to 5-formaminoimidazole-4-carboxamide-1-beta-d-ribofuranosyl 5'-monophosphate (FAICAR) in the absence of folates. The chain is 5-formaminoimidazole-4-carboxamide-1-(beta)-D-ribofuranosyl 5'-monophosphate synthetase 2 from Methanosarcina mazei (strain ATCC BAA-159 / DSM 3647 / Goe1 / Go1 / JCM 11833 / OCM 88) (Methanosarcina frisia).